Here is a 200-residue protein sequence, read N- to C-terminus: MNLKTVTGAAVELSDTAFGREFNEALVHQVVTAYLAGARQGTRAQKTRAEVSGGGKKPWRQKGTGRARAGSTRSPIWVGGGRAFAAKPQDWSQKVNRKMYRGAMQCILAELVRQDRLILVDSITVSAPKTKELISKLAELNAPRALIVTNEVDENLYLAARNIPHVNVLGTNEVDPVSLIAFDKVIMSVDAAKQFEEALA.

Residues 44–71 (AQKTRAEVSGGGKKPWRQKGTGRARAGS) are disordered.

This sequence belongs to the universal ribosomal protein uL4 family. As to quaternary structure, part of the 50S ribosomal subunit.

In terms of biological role, one of the primary rRNA binding proteins, this protein initially binds near the 5'-end of the 23S rRNA. It is important during the early stages of 50S assembly. It makes multiple contacts with different domains of the 23S rRNA in the assembled 50S subunit and ribosome. Functionally, forms part of the polypeptide exit tunnel. The polypeptide is Large ribosomal subunit protein uL4 (Psychrobacter sp. (strain PRwf-1)).